Reading from the N-terminus, the 491-residue chain is G2/mitotic-specific cyclin-A (491 aa).

The disordered stretch occupies residues 1 to 21 (MASFQIHQDMSNKENPGIKIP). A Cyclin N-terminal domain is found at 206-332 (DILEYFRESE…ILKILSFDLC (127 aa)).

This sequence belongs to the cyclin family. Cyclin AB subfamily. As to quaternary structure, component of the Frs-CycA-Cdk1 complex composed of CycA, Cdk1 and Z600. Interacts (via C-terminus) with Z600. Interacts with otu and (via C-terminus) with bam; the interaction stabilizes CycA by negatively regulating its ubiquitination. Ubiquitinated. Ubiquitination state is negatively regulated by a deubiquitinase complex made up of bam and otu.

Functionally, essential for the control of the cell cycle at the G2/M (mitosis) transition. Interacts with the Cdk1 and Cdk2 protein kinases to form MPF. G2/M cyclins accumulate steadily during G2 and are abruptly destroyed at mitosis. This chain is G2/mitotic-specific cyclin-A (CycA), found in Drosophila melanogaster (Fruit fly).